Reading from the N-terminus, the 598-residue chain is Arginine--tRNA ligase (598 aa).

Residues 131–141 (ANPTGPMHVGH) carry the 'HIGH' region motif. The tract at residues 288–309 (KLPPPKSKKGQPPPQPQPDEEG) is disordered.

The protein belongs to the class-I aminoacyl-tRNA synthetase family. In terms of assembly, monomer.

The protein localises to the cytoplasm. The catalysed reaction is tRNA(Arg) + L-arginine + ATP = L-arginyl-tRNA(Arg) + AMP + diphosphate. The sequence is that of Arginine--tRNA ligase from Anaeromyxobacter dehalogenans (strain 2CP-1 / ATCC BAA-258).